The chain runs to 366 residues: UDP-N-acetylglucosamine--N-acetylmuramyl-(pentapeptide) pyrophosphoryl-undecaprenol N-acetylglucosamine transferase (366 aa).

Residues 17 to 19 (TGG), N129, R169, S195, I251, 270 to 275 (ALTVSE), and Q296 each bind UDP-N-acetyl-alpha-D-glucosamine.

It belongs to the glycosyltransferase 28 family. MurG subfamily.

It localises to the cell inner membrane. It carries out the reaction di-trans,octa-cis-undecaprenyl diphospho-N-acetyl-alpha-D-muramoyl-L-alanyl-D-glutamyl-meso-2,6-diaminopimeloyl-D-alanyl-D-alanine + UDP-N-acetyl-alpha-D-glucosamine = di-trans,octa-cis-undecaprenyl diphospho-[N-acetyl-alpha-D-glucosaminyl-(1-&gt;4)]-N-acetyl-alpha-D-muramoyl-L-alanyl-D-glutamyl-meso-2,6-diaminopimeloyl-D-alanyl-D-alanine + UDP + H(+). Its pathway is cell wall biogenesis; peptidoglycan biosynthesis. Cell wall formation. Catalyzes the transfer of a GlcNAc subunit on undecaprenyl-pyrophosphoryl-MurNAc-pentapeptide (lipid intermediate I) to form undecaprenyl-pyrophosphoryl-MurNAc-(pentapeptide)GlcNAc (lipid intermediate II). The sequence is that of UDP-N-acetylglucosamine--N-acetylmuramyl-(pentapeptide) pyrophosphoryl-undecaprenol N-acetylglucosamine transferase from Shewanella denitrificans (strain OS217 / ATCC BAA-1090 / DSM 15013).